The following is a 172-amino-acid chain: Dehydratase cfoI (172 aa).

Active-site residues include His-86 and His-111.

The protein belongs to the scytalone dehydratase family. Homotrimer. Each subunit contains an active site, located in the central part of the hydrophobic core of the monomer, which functions independently.

Its pathway is secondary metabolite biosynthesis; flavonoid biosynthesis. Its function is as follows. Cytochrome P450 monooxygenase; part of the gene cluster that mediates the biosynthesis of chlorflavonin, a fungal flavonoid with acetolactate synthase inhibitory activity. Within the pathway, cfoI is responsible for the hydroxylation of the flavonoid skeleton at position C3 with cfoF. The pathway begins with the PKS-NRPS hybrid synthetase cfoA that uses benzoic acid or p-hydroxybenzoic acid as a starter unit with four rounds of chain elongation using malonyl-CoA to form the chalcone skeleton. Then, a new type of chalcone isomerase, cfoK, catalyzes the conversion of the chalcone into a flavanone by a histidine-mediated oxa-Michael addition mechanism. The desaturation of flavanone to flavone is catalyzed by a new type of flavone synthase, the flavin mononucleotide (FMN)-dependent oxidoreductase cfoJ. Monooxygenases cfoF, cfoG, and P450 cfoH are responsible for the hydroxylation of the flavonoid skeleton at sites C3, C8, and C2', respectively. Like cfoF, the dehydratase cfoI plays also a role in the hydroxylation of position C3. Methyltransferases cfoB, cfoC, and cfoD then catalyze the methylation of C7-OH, C8-OH, and C3-OH, respectively. Finally, the monooxygenase cfoE is responsible for the chlorination of flavonoid at position C3'. The polypeptide is Dehydratase cfoI (Aspergillus candidus).